Here is a 384-residue protein sequence, read N- to C-terminus: MNKRHSGQRVVVGLSGGVDSAVTAWLLKQQGYEVIGIFMKNWEDDDDSEYCSSNVDFIDAAAVADVIGIEIEHVNFAAEYKDRVFAEFLREYQAGRTPNPDILCNAEIKFKAFLDHALRLGAQKIATGHYARVRCVAADGRVLDAAQAQMSDGRFELLKGLDPSKDQSYFLHRLNQAQLSKTLFPVGELLKTEVRRLALEIGLPNAKKKDSTGICFIGERPFRDFLNRYIAREPGPIKDDKGRTIGQHVGLSFYTLGQRQGLGIGGLKAKGAQRGGGEHAPWFVARKDLATNTLWVVQGHEHPWLQSHGLSAQDASWVAGTAPQAGRFSAKTRYRQLDAPCTLAAGAGAAFHLSFPEPQWAVTPGQSAVLYDDEVCLGGGVIAA.

Residues 13 to 20 (GLSGGVDS) and methionine 39 contribute to the ATP site. Residues 99-101 (NPD) form an interaction with target base in tRNA region. Cysteine 104 acts as the Nucleophile in catalysis. Cysteine 104 and cysteine 215 are joined by a disulfide. Residue glycine 128 coordinates ATP. Positions 165 to 167 (KDQ) are interaction with tRNA. The Cysteine persulfide intermediate role is filled by cysteine 215. Positions 333–334 (RY) are interaction with tRNA.

Belongs to the MnmA/TRMU family.

It is found in the cytoplasm. The catalysed reaction is S-sulfanyl-L-cysteinyl-[protein] + uridine(34) in tRNA + AH2 + ATP = 2-thiouridine(34) in tRNA + L-cysteinyl-[protein] + A + AMP + diphosphate + H(+). Catalyzes the 2-thiolation of uridine at the wobble position (U34) of tRNA, leading to the formation of s(2)U34. The chain is tRNA-specific 2-thiouridylase MnmA from Albidiferax ferrireducens (strain ATCC BAA-621 / DSM 15236 / T118) (Rhodoferax ferrireducens).